A 197-amino-acid chain; its full sequence is Large ribosomal subunit protein uL10 (197 aa).

Residues 162–197 (GGASAPAAEEAPAAEEAAAEEVAAPAEAAEAATEEN) are disordered. The span at 163–197 (GASAPAAEEAPAAEEAAAEEVAAPAEAAEAATEEN) shows a compositional bias: low complexity.

It belongs to the universal ribosomal protein uL10 family. As to quaternary structure, part of the ribosomal stalk of the 50S ribosomal subunit. The N-terminus interacts with L11 and the large rRNA to form the base of the stalk. The C-terminus forms an elongated spine to which L12 dimers bind in a sequential fashion forming a multimeric L10(L12)X complex.

Its function is as follows. Forms part of the ribosomal stalk, playing a central role in the interaction of the ribosome with GTP-bound translation factors. The chain is Large ribosomal subunit protein uL10 from Paenarthrobacter aurescens (strain TC1).